Reading from the N-terminus, the 647-residue chain is XK-related protein 4 (647 aa).

A compositionally biased stretch (basic and acidic residues) spans 1–15; it reads MAAKSDGRLKMKKSS. The disordered stretch occupies residues 1 to 44; sequence MAAKSDGRLKMKKSSDVAFTPLQNSDNSGSVQGLAPGLPSGSGA. Residues 21 to 31 are compositionally biased toward polar residues; sequence PLQNSDNSGSV. Transmembrane regions (helical) follow at residues 112–132 and 142–162; these read WILA…WLAV and WFGL…VFSF. Residue serine 197 is modified to Phosphoserine. The segment at 197–238 is disordered; that stretch reads SAAGEGEVRPSTPQRQASNASKSNIAATNSGSNSNGATRTSG. Residues 207 to 236 show a composition bias toward polar residues; that stretch reads STPQRQASNASKSNIAATNSGSNSNGATRT. The next 8 helical transmembrane spans lie at 245 to 265, 303 to 323, 328 to 348, 362 to 382, 393 to 415, 425 to 445, 454 to 474, and 484 to 504; these read CSFC…GQIW, HLLA…CIIV, LQAL…WALA, KPIS…TIAA, VFQL…WIVH, WEEI…WFNV, LFIY…LWYL, and FAIP…VFML.

Belongs to the XK family. As to quaternary structure, homodimer; homodimerization takes place upon caspase cleavage. Interacts with the processed C-terminus of XRCC4 (protein XRCC4, C-terminus); interaction promotes the phospholipid scramblase activity. Post-translationally, undergoes proteolytic processing by caspase-3 (CASP3), caspase-6 (CASP6) and caspase-7 (CASP7) to generate the XK-related protein 4, processed form, leading to its activation. Highly expressed in expressed in the brain; weakly expressed in the spleen, thymus, uterus, blood vessels and fetus.

It is found in the cell membrane. It carries out the reaction a 1,2-diacyl-sn-glycero-3-phospho-L-serine(in) = a 1,2-diacyl-sn-glycero-3-phospho-L-serine(out). With respect to regulation, phospholipid scramblase activity is activated upon caspase cleavage to generate the XK-related protein 4, processed form. Does not act prior the onset of apoptosis. Its activity is regulated as follows. Homodimerizes upon caspase cleavage. Phospholipid scramblase activity is activated following interaction with the processed C-terminus of XRCC4 (protein XRCC4, C-terminus). Its function is as follows. Phospholipid scramblase that promotes phosphatidylserine exposure on apoptotic cell surface. Phosphatidylserine is a specific marker only present at the surface of apoptotic cells and acts as a specific signal for engulfment. The sequence is that of XK-related protein 4 from Mus musculus (Mouse).